The sequence spans 452 residues: Gastrin/cholecystokinin type B receptor (452 aa).

Residues 1–57 are Extracellular-facing; the sequence is MELLKLNRSLPGPGPGAALCRPEGPLLNGSGAGNLSCEPPRIRGAGTRELELAVRIT. N7, N28, and N34 each carry an N-linked (GlcNAc...) asparagine glycan. Residues 58 to 78 traverse the membrane as a helical segment; that stretch reads LYAAIFLMSVAGNVLIIVVLG. The Cytoplasmic portion of the chain corresponds to 79–99; the sequence is LSRRLRTVTNAFLLSLAVSDL. Residues 100-120 form a helical membrane-spanning segment; sequence LLAVACMPFTLLPNLMGTFIF. Over 121–127 the chain is Extracellular; it reads GTVVCKA. A disulfide bridge connects residues C125 and C203. The helical transmembrane segment at 128-148 threads the bilayer; it reads VSYFMGVSVSVSTLSLVAIAL. Over 149–171 the chain is Cytoplasmic; the sequence is ERYSAICRPLQARVWQTRSHAAR. Residues 172-192 form a helical membrane-spanning segment; it reads VIVATWMLSGLLMVPYPVYTA. Residues 193 to 218 lie on the Extracellular side of the membrane; it reads VQPAGPRVLQCMHRWPSARIRQTWSV. A helical membrane pass occupies residues 219–239; the sequence is LLLLLLFFVPGVVMAVAYGLI. The Cytoplasmic portion of the chain corresponds to 240–339; it reads SRELYLGLRF…LLAKKRVVRM (100 aa). A disordered region spans residues 256–285; sequence ESQSQVGSQGGLPGGAGQGPAHPNGHCRSE. A compositionally biased stretch (gly residues) spans 263-273; that stretch reads SQGGLPGGAGQ. The helical transmembrane segment at 340-360 threads the bilayer; the sequence is LLVIVVLFFLCWLPVYSANTW. Topologically, residues 361–376 are extracellular; it reads RAFDGPGAHRALSGAP. A helical transmembrane segment spans residues 377–397; the sequence is ISFIHLLSYASACVNPLVYCF. Residues 398 to 452 lie on the Cytoplasmic side of the membrane; it reads MHRRFRQACLDTCARCCPRPPRARPRPLPDEDPPTPSIASLSRLSYTTISTLGPG. The S-palmitoyl cysteine moiety is linked to residue C413.

The protein belongs to the G-protein coupled receptor 1 family.

The protein localises to the cell membrane. Functionally, receptor for gastrin and cholecystokinin. The CCK-B receptors occur throughout the central nervous system where they modulate anxiety, analgesia, arousal, and neuroleptic activity. This receptor mediates its action by association with G proteins that activate a phosphatidylinositol-calcium second messenger system. The polypeptide is Gastrin/cholecystokinin type B receptor (Sus scrofa (Pig)).